The sequence spans 282 residues: Succinate dehydrogenase [ubiquinone] iron-sulfur subunit, mitochondrial (282 aa).

The transit peptide at 1–30 (MAAVVGVSLKRGFSATALGRVGLQFQACRE) directs the protein to the mitochondrion. 2 positions are modified to N6-acetyllysine: K53 and K57. The 2Fe-2S ferredoxin-type domain maps to 56-135 (DKPRMQTYKV…VSKIYPLPHM (80 aa)). Residues C95, C100, C103, and C115 each contribute to the [2Fe-2S] cluster site. The segment at 148-220 (FYAQYKSIEP…PAVLMQAYRW (73 aa)) is interaction with SDHAF1. The region spanning 178 to 208 (DREKLDGLYECILCACCSTSCPSYWWNGDKY) is the 4Fe-4S ferredoxin-type domain. Residues C188, C191, and C194 each contribute to the [4Fe-4S] cluster site. Residue C198 coordinates [3Fe-4S] cluster. W203 contributes to the a ubiquinone binding site. [3Fe-4S] cluster is bound by residues C245 and C251. Residue C255 coordinates [4Fe-4S] cluster.

The protein belongs to the succinate dehydrogenase/fumarate reductase iron-sulfur protein family. As to quaternary structure, component of complex II composed of four subunits: the flavoprotein (FP) SDHA, iron-sulfur protein (IP) SDHB, and a cytochrome b560 composed of SDHC and SDHD. Interacts with SDHAF1; the interaction is required for iron-sulfur cluster incorporation into SDHB. [2Fe-2S] cluster is required as a cofactor. The cofactor is [3Fe-4S] cluster. Requires [4Fe-4S] cluster as cofactor.

It is found in the mitochondrion inner membrane. The enzyme catalyses a quinone + succinate = fumarate + a quinol. It carries out the reaction (R)-malate + a quinone = enol-oxaloacetate + a quinol. It catalyses the reaction (S)-malate + a quinone = enol-oxaloacetate + a quinol. It participates in carbohydrate metabolism; tricarboxylic acid cycle; fumarate from succinate (eukaryal route): step 1/1. Its activity is regulated as follows. Enol-oxaloacetate inhibits the succinate dehydrogenase activity. Functionally, iron-sulfur protein (IP) subunit of the succinate dehydrogenase complex (mitochondrial respiratory chain complex II), responsible for transferring electrons from succinate to ubiquinone (coenzyme Q). SDH also oxidizes malate to the non-canonical enol form of oxaloacetate, enol-oxaloacetate. Enol-oxaloacetate, which is a potent inhibitor of the succinate dehydrogenase activity, is further isomerized into keto-oxaloacetate. The sequence is that of Succinate dehydrogenase [ubiquinone] iron-sulfur subunit, mitochondrial (Sdhb) from Rattus norvegicus (Rat).